The chain runs to 120 residues: Acylphosphatase-1 (120 aa).

A2 is modified (N-acetylalanine). The Acylphosphatase-like domain occupies 8–98; that stretch reads SCEFEVFGRV…YGYANFHIKP (91 aa). Residues R23 and N41 contribute to the active site. The interval 91–120 is disordered; sequence YANFHIKPDPHENRPVHEGLGSSSSHHDSN. A compositionally biased stretch (basic and acidic residues) spans 96–107; it reads IKPDPHENRPVH.

Belongs to the acylphosphatase family.

The protein resides in the cytoplasm. The catalysed reaction is an acyl phosphate + H2O = a carboxylate + phosphate + H(+). This is Acylphosphatase-1 (Acyp) from Drosophila melanogaster (Fruit fly).